The chain runs to 370 residues: Peptidyl-prolyl cis-trans isomerase D (370 aa).

Residues 11–176 form the PPIase cyclophilin-type domain; sequence FFDISADGKP…EDWIISDCGE (166 aa). TPR repeat units lie at residues 218 to 251, 269 to 302, and 307 to 340; these read VTTL…LNDY, LSCY…EAID, and TKAL…SPED.

This sequence belongs to the cyclophilin-type PPIase family. PPIase D subfamily.

It localises to the cytoplasm. It catalyses the reaction [protein]-peptidylproline (omega=180) = [protein]-peptidylproline (omega=0). Its function is as follows. PPIases accelerate the folding of proteins. It catalyzes the cis-trans isomerization of proline imidic peptide bonds in oligopeptides. The chain is Peptidyl-prolyl cis-trans isomerase D (CPR6) from Debaryomyces hansenii (strain ATCC 36239 / CBS 767 / BCRC 21394 / JCM 1990 / NBRC 0083 / IGC 2968) (Yeast).